The chain runs to 214 residues: MRAELAVYFIAGTQDIVRGTLPGVLEEALKAGITCFQYREKGAGSLQTASERKEMALECQQLCAKYQVPFIINDDVALALEIGADGIHVGQNDEEIRQVIASCAGKMKIGLSVHSVSEAEEAERLGAVDYIGVGPIFPTISKADAEPVSGTAILEEIRRAGIKLPIVGIGGINETNSAEVLTAGADGVSVISAITRSDDCYSVIKQLKNPGYPS.

4-amino-2-methyl-5-(diphosphooxymethyl)pyrimidine is bound by residues 37-41 (QYREK) and N73. 2 residues coordinate Mg(2+): D74 and D93. S112 contacts 4-amino-2-methyl-5-(diphosphooxymethyl)pyrimidine. Residue 139–141 (TIS) coordinates 2-[(2R,5Z)-2-carboxy-4-methylthiazol-5(2H)-ylidene]ethyl phosphate. K142 lines the 4-amino-2-methyl-5-(diphosphooxymethyl)pyrimidine pocket. 2-[(2R,5Z)-2-carboxy-4-methylthiazol-5(2H)-ylidene]ethyl phosphate is bound by residues G171 and 191–192 (IS).

The protein belongs to the thiamine-phosphate synthase family. Requires Mg(2+) as cofactor.

It carries out the reaction 2-[(2R,5Z)-2-carboxy-4-methylthiazol-5(2H)-ylidene]ethyl phosphate + 4-amino-2-methyl-5-(diphosphooxymethyl)pyrimidine + 2 H(+) = thiamine phosphate + CO2 + diphosphate. The enzyme catalyses 2-(2-carboxy-4-methylthiazol-5-yl)ethyl phosphate + 4-amino-2-methyl-5-(diphosphooxymethyl)pyrimidine + 2 H(+) = thiamine phosphate + CO2 + diphosphate. The catalysed reaction is 4-methyl-5-(2-phosphooxyethyl)-thiazole + 4-amino-2-methyl-5-(diphosphooxymethyl)pyrimidine + H(+) = thiamine phosphate + diphosphate. The protein operates within cofactor biosynthesis; thiamine diphosphate biosynthesis; thiamine phosphate from 4-amino-2-methyl-5-diphosphomethylpyrimidine and 4-methyl-5-(2-phosphoethyl)-thiazole: step 1/1. Its function is as follows. Condenses 4-methyl-5-(beta-hydroxyethyl)thiazole monophosphate (THZ-P) and 2-methyl-4-amino-5-hydroxymethyl pyrimidine pyrophosphate (HMP-PP) to form thiamine monophosphate (TMP). The sequence is that of Thiamine-phosphate synthase from Listeria monocytogenes serotype 4b (strain CLIP80459).